Consider the following 483-residue polypeptide: Aspartyl/glutamyl-tRNA(Asn/Gln) amidotransferase subunit B (483 aa).

It belongs to the GatB/GatE family. GatB subfamily. Heterotrimer of A, B and C subunits.

The catalysed reaction is L-glutamyl-tRNA(Gln) + L-glutamine + ATP + H2O = L-glutaminyl-tRNA(Gln) + L-glutamate + ADP + phosphate + H(+). It catalyses the reaction L-aspartyl-tRNA(Asn) + L-glutamine + ATP + H2O = L-asparaginyl-tRNA(Asn) + L-glutamate + ADP + phosphate + 2 H(+). In terms of biological role, allows the formation of correctly charged Asn-tRNA(Asn) or Gln-tRNA(Gln) through the transamidation of misacylated Asp-tRNA(Asn) or Glu-tRNA(Gln) in organisms which lack either or both of asparaginyl-tRNA or glutaminyl-tRNA synthetases. The reaction takes place in the presence of glutamine and ATP through an activated phospho-Asp-tRNA(Asn) or phospho-Glu-tRNA(Gln). In Lachnospira eligens (strain ATCC 27750 / DSM 3376 / VPI C15-48 / C15-B4) (Eubacterium eligens), this protein is Aspartyl/glutamyl-tRNA(Asn/Gln) amidotransferase subunit B.